The sequence spans 720 residues: MPELLIELFSEEIPARMQARAAQDLQKLVTNGLVEAGITYAGARAYATPRRLTLVVSDMLAASAPVREERKGPKADAPEKAIEGFLRSTGLGREQLETRETPKGDVLFAVIEKPGRPAAEIVAEVLETTIRNFPWPKSMRWGSSSLRWVRPLHRILCLIRDEEGAEIVPLTVDGITAGDVTEGHRFLAPGEIKVHGFEDYETKLRRAKVILDAEERAEHIWADATNQAFAQGLEVVEDRRLLSEVAGLVEFPVPLMGEIDADFLDLPPEVLQTSMKEHQKFFSVRDLKSGKIVRFVTVANTETTDHGATILAGNRKVLSARLADAKFFWENDLRIARAGMQPWREALENVTFHNKLGSQAARIARIADLAATLAPQVGADPDAARTAAELAKADLSSEMVFEFPELQGLMGRYYAEAAGHPAEIAAVAQDHYQPLGPSDAVPTAPLSIAVALADKLDTLTGFWAIDEKPTGSKDPFALRRAALGVIRIVLENGLRLPLINSVKHHNSENTSRPLFSALVAHAKTDQERADGSKSMSDWKALVARSQDDLLSFFHDRLKVFLRDEGIRHDIIDACLAMEGNDDLLLLVNRARALSETLKTEDGENLLQGFKRANNILTQAEEADGVEYSYGADPKFAETDEERALFAALDTAEAVIDPALEAEDFAAATAAMASLRAPLDAFFEAVQVNAENQILRRNRLNLLSRIRATCLKLADLTRIEG.

The protein belongs to the class-II aminoacyl-tRNA synthetase family. As to quaternary structure, tetramer of two alpha and two beta subunits.

It localises to the cytoplasm. It carries out the reaction tRNA(Gly) + glycine + ATP = glycyl-tRNA(Gly) + AMP + diphosphate. This Dinoroseobacter shibae (strain DSM 16493 / NCIMB 14021 / DFL 12) protein is Glycine--tRNA ligase beta subunit.